The sequence spans 62 residues: Protein DsrB (62 aa).

It belongs to the DsrB family.

This is Protein DsrB from Shigella boydii serotype 18 (strain CDC 3083-94 / BS512).